Reading from the N-terminus, the 578-residue chain is Frizzled and smoothened-like protein Q (578 aa).

A signal peptide spans 1-23; the sequence is MKNSFLINILIIYYLFIILFVNS. At 24-233 the chain is on the extracellular side; sequence QDLKLGGSCE…GKTKILDRTN (210 aa). The region spanning 27-157 is the FZ domain; it reads KLGGSCELID…GAPMFPINST (131 aa). Intrachain disulfides connect C32-C95, C41-C88, C79-C128, and C121-C141. N-linked (GlcNAc...) asparagine glycosylation is found at N46, N64, N99, and N104. 4 N-linked (GlcNAc...) asparagine glycosylation sites follow: N144, N155, N181, and N233. A helical membrane pass occupies residues 234–254; it reads YTLTSISFITCIFMILTFGVL. Residues 255 to 261 are Cytoplasmic-facing; that stretch reads PNKITHR. Residues 262–282 traverse the membrane as a helical segment; it reads MESILSFACGGCITALSLFIQ. The Extracellular portion of the chain corresponds to 283 to 305; that stretch reads SRQDNFNCSSDPGRFKSQSDYLC. A glycan (N-linked (GlcNAc...) asparagine) is linked at N289. The chain crosses the membrane as a helical span at residues 306-326; sequence LLTGLIFQFGAITSIFWSPMI. The Cytoplasmic segment spans residues 327 to 341; it reads AYDFYITSTLGKIRK. A helical transmembrane segment spans residues 342–362; it reads FGLYRIVLWSFIFVLTALPAF. The Extracellular portion of the chain corresponds to 363–388; the sequence is GGKYSATVATNCWINSDDGSAWQYVS. A helical membrane pass occupies residues 389–409; the sequence is FYIPSWCAMGLICLFSILSVI. At 410–422 the chain is on the cytoplasmic side; it reads NVSKMYIQTPNNR. A helical membrane pass occupies residues 423 to 443; sequence ILFFNIKILITLLLFLFVLTF. The Extracellular portion of the chain corresponds to 444–490; that stretch reads ASSLKFYMEERMDTYFDAIAVWVECIGKGDPSQCELHAPGYDLKALN. A helical membrane pass occupies residues 491–511; it reads IVVIGILGFTVFIGYGLDPIV. Residues 512-578 lie on the Cytoplasmic side of the membrane; sequence IHIWMESKKF…LKSTEINQQP (67 aa). Positions 544 to 556 are enriched in low complexity; sequence NNNNNETASTSSG. Positions 544 to 578 are disordered; that stretch reads NNNNNETASTSSGNERKQTTVKMSNLKSTEINQQP. Residues 563–578 are compositionally biased toward polar residues; that stretch reads TVKMSNLKSTEINQQP.

The protein belongs to the G-protein coupled receptor Fz/Smo family.

It is found in the membrane. The polypeptide is Frizzled and smoothened-like protein Q (fslQ) (Dictyostelium discoideum (Social amoeba)).